A 254-amino-acid polypeptide reads, in one-letter code: 14-3-3-like protein GF14 epsilon (254 aa).

2 positions are modified to phosphoserine: serine 65 and serine 188.

This sequence belongs to the 14-3-3 family. In terms of assembly, interacts with DREB1A and DREB1B in the nucleus. Interacts with CINV1.

Its subcellular location is the nucleus. The protein localises to the cytoplasm. Its function is as follows. Is associated with a DNA binding complex that binds to the G box, a well-characterized cis-acting DNA regulatory element found in plant genes. The sequence is that of 14-3-3-like protein GF14 epsilon (GRF10) from Arabidopsis thaliana (Mouse-ear cress).